The sequence spans 100 residues: Urease subunit gamma (100 aa).

Belongs to the urease gamma subunit family. As to quaternary structure, heterotrimer of UreA (gamma), UreB (beta) and UreC (alpha) subunits. Three heterotrimers associate to form the active enzyme.

Its subcellular location is the cytoplasm. It carries out the reaction urea + 2 H2O + H(+) = hydrogencarbonate + 2 NH4(+). It functions in the pathway nitrogen metabolism; urea degradation; CO(2) and NH(3) from urea (urease route): step 1/1. In Rhodopseudomonas palustris (strain BisB18), this protein is Urease subunit gamma.